The primary structure comprises 1711 residues: Nuclear pore complex protein Nup214 (1711 aa).

8 consecutive repeat copies span residues 472-473 (FG), 486-487 (FG), 497-498 (FG), 511-512 (FG), 514-515 (FG), 535-536 (FG), 588-589 (TS), and 598-599 (SL). Residues 472-1703 (FGAAAAKAPA…NSNAQKPAFG (1232 aa)) are 45 X 2 AA repeats of F-G. Leucine-zipper stretches follow at residues 650-672 (LDDL…VQGL) and 767-788 (LTRL…KSKL). The segment at 886–905 (KPATANKYTQAAVAPPSPPD) is disordered. Copy 9 of the repeat occupies 1009-1010 (FG). Residues 1012 to 1081 (GSPAVAAPTP…NKSFGFGGFT (70 aa)) form a disordered region. 2 stretches are compositionally biased toward basic and acidic residues: residues 1037–1051 (TKPK…KEFK) and 1058–1072 (EESK…ETEN). An interaction with emb region spans residues 1044–1711 (AAESKEFKAV…FGGSSFMNYR (668 aa)). Tandem repeats lie at residues 1075–1076 (FG), 1077–1078 (FG), 1097–1098 (FG), 1106–1107 (FG), 1135–1136 (FG), 1218–1219 (FG), 1229–1230 (FG), and 1240–1241 (FG). Positions 1251–1261 (TSVTEANNKTD) are enriched in polar residues. The tract at residues 1251–1270 (TSVTEANNKTDPISTTPSAI) is disordered. 27 consecutive repeat copies span residues 1356 to 1357 (FG), 1388 to 1389 (FG), 1399 to 1400 (FG), 1434 to 1435 (FG), 1449 to 1450 (FG), 1458 to 1459 (FG), 1472 to 1473 (FG), 1481 to 1482 (FG), 1487 to 1488 (FG), 1507 to 1508 (FG), 1512 to 1513 (FG), 1539 to 1540 (FG), 1547 to 1548 (FG), 1562 to 1563 (FG), 1571 to 1572 (FG), 1584 to 1585 (FG), 1588 to 1589 (FG), 1601 to 1602 (FG), 1617 to 1618 (FG), 1623 to 1624 (FG), 1629 to 1630 (FG), 1635 to 1636 (FG), 1641 to 1642 (FG), 1647 to 1648 (FG), 1650 to 1651 (FG), 1662 to 1663 (FG), and 1686 to 1687 (FG). Disordered stretches follow at residues 1533–1552 (SPQA…SPAT) and 1557–1614 (SGGS…TTTP). 2 stretches are compositionally biased toward gly residues: residues 1560 to 1572 (SIFG…GGFG) and 1582 to 1595 (GGFG…GGGS). Low complexity predominate over residues 1596–1614 (VAQTGFGSPQAPQQQTTTP). The span at 1688 to 1698 (NLAQTGNSNAQ) shows a compositional bias: polar residues. The segment at 1688–1711 (NLAQTGNSNAQKPAFGGSSFMNYR) is disordered. Repeat unit 45 spans residues 1702-1703 (FG).

In terms of assembly, component of the nuclear pore complex. Interacts with mbo/Nup88 and (via C-terminus) with emb to attenuate emb-mediated protein export.

Its subcellular location is the nucleus. The protein resides in the nuclear pore complex. It is found in the nucleus membrane. Part of the nuclear pore complex. Serves as a docking site in the receptor-mediated import of substrates across the nuclear pore complex including emb, RanGAP and phosphorylated Mad. Protects mbo/Nup88 from proteasomal degradation at the nuclear pore. Together with mbo/Nup88, sequesters emb in the cytoplasm and thereby attenuates nuclear export signal (NES)-mediated nuclear export. Together with mbo/Nup88, required for the nuclear import of the Rel family transcription factors dorsal (dl) and Dorsal-related immunity factor (Dif) and the activation of an immune response. This is Nuclear pore complex protein Nup214 from Drosophila melanogaster (Fruit fly).